The sequence spans 520 residues: GMP synthase [glutamine-hydrolyzing] (520 aa).

Residues T9 to G202 enclose the Glutamine amidotransferase type-1 domain. The active-site Nucleophile is C86. Catalysis depends on residues H176 and E178. Residues W203–R395 enclose the GMPS ATP-PPase domain. S230–S236 contributes to the ATP binding site.

Homodimer.

The enzyme catalyses XMP + L-glutamine + ATP + H2O = GMP + L-glutamate + AMP + diphosphate + 2 H(+). It functions in the pathway purine metabolism; GMP biosynthesis; GMP from XMP (L-Gln route): step 1/1. Functionally, catalyzes the synthesis of GMP from XMP. The chain is GMP synthase [glutamine-hydrolyzing] from Brucella canis (strain ATCC 23365 / NCTC 10854 / RM-666).